The chain runs to 402 residues: Phosphoglycerate kinase (402 aa).

Substrate is bound by residues 24–26 (DFN), Arg40, 63–66 (HFGR), Arg122, and Arg155. ATP contacts are provided by residues Lys206, Gly297, Glu328, and 357-360 (GGDS).

This sequence belongs to the phosphoglycerate kinase family. In terms of assembly, monomer.

It localises to the cytoplasm. The enzyme catalyses (2R)-3-phosphoglycerate + ATP = (2R)-3-phospho-glyceroyl phosphate + ADP. It functions in the pathway carbohydrate degradation; glycolysis; pyruvate from D-glyceraldehyde 3-phosphate: step 2/5. The chain is Phosphoglycerate kinase from Synechococcus sp. (strain WH7803).